The sequence spans 597 residues: Adenine deaminase (597 aa).

This sequence belongs to the metallo-dependent hydrolases superfamily. Adenine deaminase family. Mn(2+) is required as a cofactor.

It carries out the reaction adenine + H2O + H(+) = hypoxanthine + NH4(+). In Paracoccus denitrificans (strain Pd 1222), this protein is Adenine deaminase.